A 444-amino-acid polypeptide reads, in one-letter code: ATP-dependent protease ATPase subunit HslU (444 aa).

Residues Ile-18 and 60 to 65 (GVGKTE) contribute to the ATP site. A disordered region spans residues 143–163 (WGEVESHDSHSSTRQAFRKKL). Residues Asp-257, Glu-322, and Arg-394 each contribute to the ATP site.

The protein belongs to the ClpX chaperone family. HslU subfamily. In terms of assembly, a double ring-shaped homohexamer of HslV is capped on each side by a ring-shaped HslU homohexamer. The assembly of the HslU/HslV complex is dependent on binding of ATP.

It localises to the cytoplasm. Its function is as follows. ATPase subunit of a proteasome-like degradation complex; this subunit has chaperone activity. The binding of ATP and its subsequent hydrolysis by HslU are essential for unfolding of protein substrates subsequently hydrolyzed by HslV. HslU recognizes the N-terminal part of its protein substrates and unfolds these before they are guided to HslV for hydrolysis. This Haemophilus influenzae (strain PittEE) protein is ATP-dependent protease ATPase subunit HslU.